The primary structure comprises 339 residues: Uracil nucleotide/cysteinyl leukotriene receptor (339 aa).

Over 1–36 (MDGLETALPSLTDNASLAYSEQCGQETPLENMLFAC) the chain is Extracellular. N-linked (GlcNAc...) asparagine glycosylation is present at N14. The chain crosses the membrane as a helical span at residues 37–57 (FYLLDFILAFVGNALALWLFI). Residues 58 to 64 (WDHKSGT) are Cytoplasmic-facing. A helical membrane pass occupies residues 65 to 85 (PANVFLMHLAVADLSCVLVLP). Topologically, residues 86–105 (TRLVYHFSGNHWPFGEIPCR) are extracellular. An intrachain disulfide couples C104 to C181. Residues 106–126 (LTGFLFYLNMYASIYFLTCIS) form a helical membrane-spanning segment. The Cytoplasmic segment spans residues 127 to 147 (ADRFLAIVHPVKSLKLRRPLY). The chain crosses the membrane as a helical span at residues 148-168 (AHLACAFLWIVVAVAMAPLLV). The Extracellular portion of the chain corresponds to 169–195 (SPQTVQTNHTVVCLQLYREKASHHALA). Residue N176 is glycosylated (N-linked (GlcNAc...) asparagine). Residues 196 to 216 (SLAVAFTFPFITTVTCYLLII) traverse the membrane as a helical segment. Residues 217 to 232 (RSLRQGPRIEKHLKNK) lie on the Cytoplasmic side of the membrane. A helical transmembrane segment spans residues 233-253 (AVRMIAMVLAIFLICFVPYHI). Residues 254–280 (HRSVYVLHYRGGGTSCSAQRALALGNR) are Extracellular-facing. A helical transmembrane segment spans residues 281–301 (ITSCLTSLNGALDPVMYFFVA). Over 302 to 339 (EKFRHALCNLLCSKRLTGPPPSFEGKTNESSLSARSEL) the chain is Cytoplasmic.

The protein belongs to the G-protein coupled receptor 1 family. As to expression, expressed in brain, kidney, and heart. Highest level in brain.

The protein resides in the cell membrane. Dual specificity receptor for uracil nucleotides and cysteinyl leukotrienes (CysLTs). Signals through G(i) and inhibition of adenylyl cyclase. May mediate brain damage by nucleotides and CysLTs following ischemia. This Rattus norvegicus (Rat) protein is Uracil nucleotide/cysteinyl leukotriene receptor.